Reading from the N-terminus, the 547-residue chain is CTP synthase (547 aa).

An amidoligase domain region spans residues 1–265 (MARYIFITGG…DQAVLDAFQI (265 aa)). Position 13 (Ser-13) interacts with CTP. A UTP-binding site is contributed by Ser-13. Residues 14–19 (SLGKGL) and Asp-71 each bind ATP. The Mg(2+) site is built by Asp-71 and Glu-139. CTP is bound by residues 146–148 (DIE), 186–191 (KTKPTQ), and Lys-222. Residues 186 to 191 (KTKPTQ) and Lys-222 each bind UTP. A Glutamine amidotransferase type-1 domain is found at 291 to 546 (RIAVVGKYTQ…IRAAMDNERL (256 aa)). Position 352 (Gly-352) interacts with L-glutamine. The Nucleophile; for glutamine hydrolysis role is filled by Cys-379. L-glutamine-binding positions include 380-383 (LGMQ), Glu-403, and Arg-474. Active-site residues include His-519 and Glu-521.

It belongs to the CTP synthase family. In terms of assembly, homotetramer.

It carries out the reaction UTP + L-glutamine + ATP + H2O = CTP + L-glutamate + ADP + phosphate + 2 H(+). It catalyses the reaction L-glutamine + H2O = L-glutamate + NH4(+). The catalysed reaction is UTP + NH4(+) + ATP = CTP + ADP + phosphate + 2 H(+). Its pathway is pyrimidine metabolism; CTP biosynthesis via de novo pathway; CTP from UDP: step 2/2. Its activity is regulated as follows. Allosterically activated by GTP, when glutamine is the substrate; GTP has no effect on the reaction when ammonia is the substrate. The allosteric effector GTP functions by stabilizing the protein conformation that binds the tetrahedral intermediate(s) formed during glutamine hydrolysis. Inhibited by the product CTP, via allosteric rather than competitive inhibition. In terms of biological role, catalyzes the ATP-dependent amination of UTP to CTP with either L-glutamine or ammonia as the source of nitrogen. Regulates intracellular CTP levels through interactions with the four ribonucleotide triphosphates. In Paracoccus denitrificans (strain Pd 1222), this protein is CTP synthase.